Here is a 523-residue protein sequence, read N- to C-terminus: 11-oxo-beta-amyrin 30-oxidase (523 aa).

The helical transmembrane segment at 9–29 (AIWVVLTVILAAIPIWVCHMV) threads the bilayer. C471 is a heme binding site.

It belongs to the cytochrome P450 family. Heme is required as a cofactor. As to expression, expressed in roots, stolons and stems. Not detected in leaves.

It localises to the membrane. It catalyses the reaction 11-oxo-beta-amyrin + 3 reduced [NADPH--hemoprotein reductase] + 3 O2 = glycyrrhetinate + 3 oxidized [NADPH--hemoprotein reductase] + 4 H2O + 4 H(+). It carries out the reaction 11-oxo-beta-amyrin + reduced [NADPH--hemoprotein reductase] + O2 = 30-hydroxy-11-oxo-beta-amyrin + oxidized [NADPH--hemoprotein reductase] + H2O + H(+). The catalysed reaction is 30-hydroxy-11-oxo-beta-amyrin + reduced [NADPH--hemoprotein reductase] + O2 = glycyrrhetaldehyde + oxidized [NADPH--hemoprotein reductase] + 2 H2O + H(+). The enzyme catalyses glycyrrhetaldehyde + reduced [NADPH--hemoprotein reductase] + O2 = glycyrrhetinate + oxidized [NADPH--hemoprotein reductase] + H2O + 2 H(+). Involved in the biosynthesis of Glycyrrhetinic acid (GA), a natural product which exhibits anti-inflammatory activity. Involved in the biosynthesis of the triterpenoid saponin glycyrrhizin. Catalyzes three sequential oxidation steps at C-30 of 11-oxo-beta-amyrin. Also able to catalyze C-30 monohydroxylation of beta-amyrin to produce 30-hydroxy-beta-amyrin. May be also responsible for the oxidation at positions C-22 and C-29 in addition to C-30. The polypeptide is 11-oxo-beta-amyrin 30-oxidase (Glycyrrhiza uralensis (Chinese licorice)).